Here is a 233-residue protein sequence, read N- to C-terminus: Protein AC81 (233 aa).

2 helical membrane passes run 171–191 and 194–214; these read SFQT…VEKF and INLL…NYII.

The protein localises to the host nucleus. The protein resides in the host membrane. It is found in the virion. Its function is as follows. Plays an essential role in the assembly of nucleocapsids with envelopes. This chain is Protein AC81 (AC81), found in Autographa californica nuclear polyhedrosis virus (AcMNPV).